Consider the following 137-residue polypeptide: MARTILAFDFGTYSIGCAVGQDITGTAQGLPSFKAQDGIPNWDQIEKVIKEWQPERLVVGLPLNMDGSEQPLTQRAKKFANRLNGRFNLPVELQDERLTTVSAKAEIFERGGYKALKKDKVDSISACLILESWFEAQ.

This sequence belongs to the YqgF nuclease family.

It localises to the cytoplasm. Functionally, could be a nuclease involved in processing of the 5'-end of pre-16S rRNA. The polypeptide is Putative pre-16S rRNA nuclease (Actinobacillus pleuropneumoniae serotype 5b (strain L20)).